A 228-amino-acid chain; its full sequence is Probable septum site-determining protein MinC (228 aa).

The protein belongs to the MinC family. In terms of assembly, interacts with MinD and FtsZ.

Its function is as follows. Cell division inhibitor that blocks the formation of polar Z ring septums. Rapidly oscillates between the poles of the cell to destabilize FtsZ filaments that have formed before they mature into polar Z rings. Prevents FtsZ polymerization. This is Probable septum site-determining protein MinC from Yersinia enterocolitica serotype O:8 / biotype 1B (strain NCTC 13174 / 8081).